The chain runs to 566 residues: Probable cytochrome P450 519D1 (566 aa).

Residues M1–K21 form a helical membrane-spanning segment. The tract at residues F471–K491 is disordered. Positions N472–N487 are enriched in low complexity. Residue C510 coordinates heme.

Belongs to the cytochrome P450 family. Requires heme as cofactor.

The protein localises to the membrane. This is Probable cytochrome P450 519D1 (cyp519D1) from Dictyostelium discoideum (Social amoeba).